The sequence spans 215 residues: Sodium channel regulatory subunit beta-2 (215 aa).

Positions 1-29 are cleaved as a signal peptide; that stretch reads MHRDAWLPRPAFSLTGLSLFFSLVPPGRS. At 30-157 the chain is on the extracellular side; it reads MEVTAPTTLS…LEVPPERDST (128 aa). One can recognise an Ig-like C2-type domain in the interval 32-154; it reads VTAPTTLSVL…QVLLEVPPER (123 aa). Residues Asn42, Asn66, and Asn74 are each glycosylated (N-linked (GlcNAc...) asparagine). 2 disulfides stabilise this stretch: Cys50/Cys127 and Cys72/Cys75. A helical membrane pass occupies residues 158–179; it reads VAVIVGASVGGFLAVVILVLMV. Over 180-215 the chain is Cytoplasmic; sequence VKCVRRKKEQKLSTDDLKTEEEGKMDGEGNAEDGTK. Positions 188-215 are disordered; sequence EQKLSTDDLKTEEEGKMDGEGNAEDGTK. Positions 189-215 are enriched in basic and acidic residues; that stretch reads QKLSTDDLKTEEEGKMDGEGNAEDGTK. Phosphoserine is present on Ser192.

This sequence belongs to the sodium channel auxiliary subunit SCN2B (TC 8.A.17) family. A voltage-gated sodium (Nav) channel consists of an ion-conducting pore-forming alpha subunit functional on its own that is regulated by one or more beta subunits. The beta subunit SCN2B is disulfide-linked to the pore-forming alpha subunit. Interacts with SCN1A; regulatory subunit of SCN1A/Nav1.1. Interacts with SCN2A; regulatory subunit of SCN2A/Nav1.2. Interacts with SCN3A; regulatory subunit of SCN3A/Nav1.3. Interacts with SCN5A; regulatory subunit of SCN5A/Nav1.5. Interacts with SCN8A; regulatory subunit of SCN8A/Nav1.6. Interacts with SCN9A; regulatory subunit of SCN9A/Nav1.7. Interacts with SCN10A; regulatory subunit of SCN10A/Nav1.8. Interacts with TNR; may play a crucial role in clustering and regulation of activity of SCN2B-containing Nav channels at nodes of Ranvier.

Its subcellular location is the cell membrane. It is found in the cell projection. It localises to the axon. Regulatory subunit of multiple voltage-gated sodium (Nav) channels directly mediating the depolarization of excitable membranes. Navs, also called VGSCs (voltage-gated sodium channels) or VDSCs (voltage-dependent sodium channels), operate by switching between closed and open conformations depending on the voltage difference across the membrane. In the open conformation they allow Na(+) ions to selectively pass through the pore, along their electrochemical gradient. The influx of Na+ ions provokes membrane depolarization, initiating the propagation of electrical signals throughout cells and tissues. The accessory beta subunits participate in localization and functional modulation of the Nav channels. Modulates the activity of SCN1A/Nav1.1, SCN2A/Nav1.2, SCN2A/Nav1.3, SCN5A/Nav1.5, SCN8A/Nav1.6, SCN9A/Nav1.7 and SCN10A/Nav1.8. The polypeptide is Sodium channel regulatory subunit beta-2 (Mus musculus (Mouse)).